The chain runs to 221 residues: MHGIAVIELKGYREWTESLGPRREHIIQQIQAKLHATLWKSFTTVGALPHHFRYDFFIALVNNISSAAVESAVAKIARHSPVPIDFCIGTGDTPYSAYLNCRGKEVEATSFSIVAHMDIVNSTKTTKLNGPLDVYSHIVRLIDTLLDVCKEYGCLVFYLGGDNTALFLPTPDVINEIVRNIDTRVRVGVGVAKKPYNAFVKATRGLDYLRSTNREGIKIVK.

Belongs to the archaeal-type GTP cyclohydrolase family.

It catalyses the reaction GTP + 3 H2O = 2-amino-5-formylamino-6-(5-phospho-D-ribosylamino)pyrimidin-4(3H)-one + 2 phosphate + 2 H(+). Catalyzes the formation of 2-amino-5-formylamino-6-ribofuranosylamino-4(3H)-pyrimidinone ribonucleotide monophosphate and inorganic phosphate from GTP. Also has an independent pyrophosphate phosphohydrolase activity. The chain is GTP cyclohydrolase III from Pyrobaculum islandicum (strain DSM 4184 / JCM 9189 / GEO3).